The primary structure comprises 257 residues: High affinity immunoglobulin epsilon receptor subunit alpha (257 aa).

The signal sequence occupies residues 1-25; it reads MAPAMESPTLLCVALLFFAPDGVLA. Topologically, residues 26–205 are extracellular; the sequence is VPQKPKVSLN…KAPREKYWLQ (180 aa). Ig-like domains follow at residues 30-110 and 111-193; these read PKVS…EVFS and DWLL…LNIT. Asn-46, Asn-67, Asn-75, Asn-99, Asn-160, Asn-165, and Asn-191 each carry an N-linked (GlcNAc...) asparagine glycan. Cys-51 and Cys-93 are disulfide-bonded. Residues Cys-132 and Cys-176 are joined by a disulfide bond. Residues 206-224 traverse the membrane as a helical segment; it reads FFIPLLVVILFAVDTGLFI. The Cytoplasmic segment spans residues 225 to 257; the sequence is STQQQVTFLLKIKRTRKGFRLLNPHPKPNPKNN.

As to quaternary structure, tetramer of an alpha chain, a beta chain, and two disulfide linked gamma chains. Interacts with IGHE (via CH3 region). In terms of tissue distribution, expressed in eosinophils.

It is found in the cell membrane. Its function is as follows. High-affinity receptor for immunoglobulin epsilon/IgE. Mediates IgE effector functions in myeloid cells. Upon IgE binding and antigen/allergen cross-linking initiates signaling pathways that lead to myeloid cell activation and differentiation. On mast cells, basophils and eosinophils stimulates the secretion of vasoactive amines, lipid mediators and cytokines that contribute to inflammatory response, tissue remodeling and cytotoxicity against microbes. Triggers the immediate hypersensitivity response to allergens as a host defense mechanism against helminth parasites, pathogenic bacteria and venom toxicity. When dysregulated, it can elicit harmful life-threatening allergic and anaphylactic reactions. In Homo sapiens (Human), this protein is High affinity immunoglobulin epsilon receptor subunit alpha (FCER1A).